Reading from the N-terminus, the 427-residue chain is Enolase (427 aa).

Gln-163 lines the (2R)-2-phosphoglycerate pocket. The Proton donor role is filled by Glu-205. Positions 242, 285, and 312 each coordinate Mg(2+). (2R)-2-phosphoglycerate-binding residues include Lys-337, Arg-366, Ser-367, and Lys-388. Lys-337 acts as the Proton acceptor in catalysis.

The protein belongs to the enolase family. The cofactor is Mg(2+).

The protein resides in the cytoplasm. It localises to the secreted. Its subcellular location is the cell surface. It catalyses the reaction (2R)-2-phosphoglycerate = phosphoenolpyruvate + H2O. The protein operates within carbohydrate degradation; glycolysis; pyruvate from D-glyceraldehyde 3-phosphate: step 4/5. Its function is as follows. Catalyzes the reversible conversion of 2-phosphoglycerate (2-PG) into phosphoenolpyruvate (PEP). It is essential for the degradation of carbohydrates via glycolysis. The polypeptide is Enolase (Laribacter hongkongensis (strain HLHK9)).